The sequence spans 83 residues: UPF0248 protein PH1212.1 (83 aa).

This sequence belongs to the UPF0248 family.

This Pyrococcus horikoshii (strain ATCC 700860 / DSM 12428 / JCM 9974 / NBRC 100139 / OT-3) protein is UPF0248 protein PH1212.1.